A 184-amino-acid chain; its full sequence is ATP synthase subunit b (184 aa).

A helical membrane pass occupies residues Leu-16–Phe-36.

It belongs to the ATPase B chain family. In terms of assembly, F-type ATPases have 2 components, F(1) - the catalytic core - and F(0) - the membrane proton channel. F(1) has five subunits: alpha(3), beta(3), gamma(1), delta(1), epsilon(1). F(0) has three main subunits: a(1), b(2) and c(10-14). The alpha and beta chains form an alternating ring which encloses part of the gamma chain. F(1) is attached to F(0) by a central stalk formed by the gamma and epsilon chains, while a peripheral stalk is formed by the delta and b chains.

The protein localises to the cell membrane. Functionally, f(1)F(0) ATP synthase produces ATP from ADP in the presence of a proton or sodium gradient. F-type ATPases consist of two structural domains, F(1) containing the extramembraneous catalytic core and F(0) containing the membrane proton channel, linked together by a central stalk and a peripheral stalk. During catalysis, ATP synthesis in the catalytic domain of F(1) is coupled via a rotary mechanism of the central stalk subunits to proton translocation. Its function is as follows. Component of the F(0) channel, it forms part of the peripheral stalk, linking F(1) to F(0). The protein is ATP synthase subunit b of Streptomyces coelicolor (strain ATCC BAA-471 / A3(2) / M145).